We begin with the raw amino-acid sequence, 245 residues long: 1-(5-phosphoribosyl)-5-[(5-phosphoribosylamino)methylideneamino] imidazole-4-carboxamide isomerase (245 aa).

The active-site Proton acceptor is aspartate 7. Aspartate 129 serves as the catalytic Proton donor.

It belongs to the HisA/HisF family.

The protein localises to the cytoplasm. The catalysed reaction is 1-(5-phospho-beta-D-ribosyl)-5-[(5-phospho-beta-D-ribosylamino)methylideneamino]imidazole-4-carboxamide = 5-[(5-phospho-1-deoxy-D-ribulos-1-ylimino)methylamino]-1-(5-phospho-beta-D-ribosyl)imidazole-4-carboxamide. The protein operates within amino-acid biosynthesis; L-histidine biosynthesis; L-histidine from 5-phospho-alpha-D-ribose 1-diphosphate: step 4/9. The chain is 1-(5-phosphoribosyl)-5-[(5-phosphoribosylamino)methylideneamino] imidazole-4-carboxamide isomerase from Erwinia tasmaniensis (strain DSM 17950 / CFBP 7177 / CIP 109463 / NCPPB 4357 / Et1/99).